Here is a 275-residue protein sequence, read N- to C-terminus: Putative pyruvate, phosphate dikinase regulatory protein (275 aa).

Position 149 to 156 (149 to 156 (GVSRTSKT)) interacts with ADP.

The protein belongs to the pyruvate, phosphate/water dikinase regulatory protein family. PDRP subfamily.

It catalyses the reaction N(tele)-phospho-L-histidyl/L-threonyl-[pyruvate, phosphate dikinase] + ADP = N(tele)-phospho-L-histidyl/O-phospho-L-threonyl-[pyruvate, phosphate dikinase] + AMP + H(+). The enzyme catalyses N(tele)-phospho-L-histidyl/O-phospho-L-threonyl-[pyruvate, phosphate dikinase] + phosphate + H(+) = N(tele)-phospho-L-histidyl/L-threonyl-[pyruvate, phosphate dikinase] + diphosphate. Bifunctional serine/threonine kinase and phosphorylase involved in the regulation of the pyruvate, phosphate dikinase (PPDK) by catalyzing its phosphorylation/dephosphorylation. This Levilactobacillus brevis (strain ATCC 367 / BCRC 12310 / CIP 105137 / JCM 1170 / LMG 11437 / NCIMB 947 / NCTC 947) (Lactobacillus brevis) protein is Putative pyruvate, phosphate dikinase regulatory protein.